Reading from the N-terminus, the 253-residue chain is Pimeloyl-[acyl-carrier protein] methyl ester esterase (253 aa).

Substrate contacts are provided by residues Trp18, 78–79, and 139–143; these read SL and FLALD. Ser78 acts as the Nucleophile in catalysis. Catalysis depends on residues Asp203 and His231. His231 is a substrate binding site.

The protein belongs to the AB hydrolase superfamily. Carboxylesterase BioH family. In terms of assembly, monomer.

The protein localises to the cytoplasm. It catalyses the reaction 6-carboxyhexanoyl-[ACP] methyl ester + H2O = 6-carboxyhexanoyl-[ACP] + methanol + H(+). It functions in the pathway cofactor biosynthesis; biotin biosynthesis. Functionally, the physiological role of BioH is to remove the methyl group introduced by BioC when the pimeloyl moiety is complete. It allows to synthesize pimeloyl-ACP via the fatty acid synthetic pathway through the hydrolysis of the ester bonds of pimeloyl-ACP esters. The sequence is that of Pimeloyl-[acyl-carrier protein] methyl ester esterase from Xanthomonas axonopodis pv. citri (strain 306).